A 475-amino-acid polypeptide reads, in one-letter code: MTQSVVVQVGQCGNQIGCCFWDLALREHAAVNQKGIYDDAISSFFRNVDTRAVGDGGSISKGRISSLKARAVLIDMEEGVVNEILQGPLRDVFDSKQLITDISGSGNNWAVGHKVFGCLYREQILEKLRKSAEQCDCLQCFFIIHSMGGGTGSGLGTFLLKVLEDEFPEVYRFVTAVYPSSEDDVITSPYNSMLAMKELNEHADCVLPIDNQSLFDIISKIDLVVNSGKLGSAVKPKSLITSNMGAVKKHHKKPFDAMNNIVANLLLSLTSSARFEGSLNMDLNEISMNLVPFPKLHYLVSSLTPLYTLADVNIPPRRLDQMFSDAFSKDHQLIQADPRHSLYLACALIVRGNVQISDLRRNIERLKPALQFVSWNQEGWKTSLCSVPPVGHSHSLLALANNTCVKPTFMELRERFTRLYKKKAHLHHYLQVDGMEESTFTEAVSSLSALIQEYSDLDATKSLPVPDVPRLSVAL.

148-154 is a binding site for GTP; that stretch reads GGGTGSG.

The protein belongs to the tubulin family. As to quaternary structure, found in a complex with TEDC1, TEDC2, TUBE1 and TUBD1.

The protein localises to the cytoplasm. The protein resides in the cytoskeleton. Its subcellular location is the microtubule organizing center. It localises to the centrosome. This Mus musculus (Mouse) protein is Tubulin epsilon chain (Tube1).